The following is a 477-amino-acid chain: MIRRLQDSGDLVRAFPRVHFVGIGGTGMSGIAEVMLTLGYEVSGSDNADNAATRRLAKLGARVMRGHSAANVLGTDCVVVSSAIREDNPELMEARSQRIPIMPRAAMLAELMRFRRGIAVAGTHGKTTTTSLAAAVLSEGGLDPTFVIGGQLLAAGANAKLGGGQWLVAEADESDGSFLRLNPLMAVITNIDADHLENYGNDFARVQAAFAEFLQRLPFYGLALLCIDDPEVAALAGKTPRHVMSYGMSENADVRAEDVVQDGPRMRFTLRLPEGTTTPVTLALPGRHNVLNALAAAAIGWQLGVAPDTIARALENFAGIGRRFNDLGEVTTASGARVRVVDDYGHHPRELEAVFAAARGGWPDKRLVVAFQPHRYSRTRDQFDAFAAVLSTVDALVLSEVYPAGEAPIPGADSRALARAIRARGRSEPVVVGQVAGLSEVLPDVLQDGDLLLMMGAGDIGYVAQQIVTDGFVGAPA.

An ATP-binding site is contributed by G122–T128.

Belongs to the MurCDEF family.

The protein resides in the cytoplasm. The catalysed reaction is UDP-N-acetyl-alpha-D-muramate + L-alanine + ATP = UDP-N-acetyl-alpha-D-muramoyl-L-alanine + ADP + phosphate + H(+). Its pathway is cell wall biogenesis; peptidoglycan biosynthesis. In terms of biological role, cell wall formation. This is UDP-N-acetylmuramate--L-alanine ligase from Xanthomonas campestris pv. campestris (strain 8004).